A 175-amino-acid polypeptide reads, in one-letter code: MSERIIMDDAAIQRTVTRIAHEILEYNKGTDNLILLGIKTRGEYLANRIQDKIHQIEQQRIPTGTIDITYFRDDIEHMSSLTTKDAIDIDTDITDKVVIIIDDVLYTGRTVRASLDAILLNARPIKIGLAVLVDRGHRELPIRADFVGKNIPTSKEETVSVYLEEMDQRNAVIIK.

Positions 98 to 110 match the PRPP-binding motif; sequence VIIIDDVLYTGRT.

Belongs to the purine/pyrimidine phosphoribosyltransferase family. PyrR subfamily. In terms of assembly, homodimer and homohexamer; in equilibrium.

The enzyme catalyses UMP + diphosphate = 5-phospho-alpha-D-ribose 1-diphosphate + uracil. Regulates transcriptional attenuation of the pyrimidine nucleotide (pyr) operon by binding in a uridine-dependent manner to specific sites on pyr mRNA. This disrupts an antiterminator hairpin in the RNA and favors formation of a downstream transcription terminator, leading to a reduced expression of downstream genes. Its function is as follows. Also displays a weak uracil phosphoribosyltransferase activity which is not physiologically significant. The polypeptide is Bifunctional protein PyrR (Staphylococcus aureus (strain bovine RF122 / ET3-1)).